We begin with the raw amino-acid sequence, 321 residues long: Probable cell division protein WhiA (321 aa).

Residues 275 to 308 (SLDELGRLADPPMTKDAVAGRIRRLLAMADKRAA) constitute a DNA-binding region (H-T-H motif).

Belongs to the WhiA family.

Its function is as follows. Involved in cell division and chromosome segregation. The protein is Probable cell division protein WhiA of Micrococcus luteus (strain ATCC 4698 / DSM 20030 / JCM 1464 / CCM 169 / CCUG 5858 / IAM 1056 / NBRC 3333 / NCIMB 9278 / NCTC 2665 / VKM Ac-2230) (Micrococcus lysodeikticus).